The following is a 218-amino-acid chain: Ribose-5-phosphate isomerase A (218 aa).

Residues 28–31 (TGST), 81–84 (DGAD), and 94–97 (KGGG) contribute to the substrate site. Glu103 serves as the catalytic Proton acceptor. Residue Lys121 coordinates substrate.

This sequence belongs to the ribose 5-phosphate isomerase family. As to quaternary structure, homodimer.

The enzyme catalyses aldehydo-D-ribose 5-phosphate = D-ribulose 5-phosphate. It participates in carbohydrate degradation; pentose phosphate pathway; D-ribose 5-phosphate from D-ribulose 5-phosphate (non-oxidative stage): step 1/1. Catalyzes the reversible conversion of ribose-5-phosphate to ribulose 5-phosphate. The sequence is that of Ribose-5-phosphate isomerase A from Vibrio campbellii (strain ATCC BAA-1116).